Reading from the N-terminus, the 305-residue chain is MHVQDRHGRPVMSLRLSITGRCNVNCIYCHRDGMTSSRGELSAADIEKLCRVASDLGVGKIRLSGGEPLIRDDIVEIVERINNIGFRDISITTNGTLLEGYSAALSEAGLDRVNVSFDTLNPETYRFITRKDYLERVKSGITSAVDVGLDPVKINMVILRGVNHHEVWDMFEFCREKGAVLQIIELLKTESCHDDAVERYHCDITPIEAELAEMADRIRTRKFMQDRKKYYIDGGEIEVVRPMDNTRFCANCTRLRVTPDGKLKPCLLRNDNLVDTRDALRENDTGRLRELFFEAIRRRSPYYTP.

The 228-residue stretch at 6-233 (RHGRPVMSLR…MQDRKKYYID (228 aa)) folds into the Radical SAM core domain. Arg-15 provides a ligand contact to GTP. The [4Fe-4S] cluster site is built by Cys-22 and Cys-26. Tyr-28 lines the S-adenosyl-L-methionine pocket. Cys-29 contacts [4Fe-4S] cluster. Arg-62 serves as a coordination point for GTP. An S-adenosyl-L-methionine-binding site is contributed by Gly-66. Thr-92 provides a ligand contact to GTP. Ser-116 is an S-adenosyl-L-methionine binding site. GTP is bound at residue Lys-153. The [4Fe-4S] cluster site is built by Cys-249 and Cys-252. 254–256 (RLR) contacts GTP. A [4Fe-4S] cluster-binding site is contributed by Cys-266.

This sequence belongs to the radical SAM superfamily. MoaA family. [4Fe-4S] cluster serves as cofactor.

It carries out the reaction GTP + AH2 + S-adenosyl-L-methionine = (8S)-3',8-cyclo-7,8-dihydroguanosine 5'-triphosphate + 5'-deoxyadenosine + L-methionine + A + H(+). It functions in the pathway cofactor biosynthesis; molybdopterin biosynthesis. Its function is as follows. Catalyzes the cyclization of GTP to (8S)-3',8-cyclo-7,8-dihydroguanosine 5'-triphosphate. This is Probable GTP 3',8-cyclase from Methanothermobacter thermautotrophicus (strain ATCC 29096 / DSM 1053 / JCM 10044 / NBRC 100330 / Delta H) (Methanobacterium thermoautotrophicum).